Here is a 186-residue protein sequence, read N- to C-terminus: Protein SPMIP2 (186 aa).

The disordered stretch occupies residues 163–186; the sequence is SSLPRASKPPKLPKLPKKEKKRKH. The segment covering 176 to 186 has biased composition (basic residues); that stretch reads KLPKKEKKRKH.

This chain is Protein SPMIP2, found in Homo sapiens (Human).